The primary structure comprises 370 residues: MFRSALKQIVTYEAGKPIELVVREYGIKPEDIIKLGSNENPYGTSAQVVESLQKNAHKAFLYPDDSMYELKNALASHFDVESKHIIIGAGSDQIIEFCMQALNHHNAQVLMAKTTFAMYEVYAKLAGVEISKTPSDEHILEEFFQLYQSEKERKHISAVFLCAPNNPLGECLDAAAIEQFIQAVDKDTLVIVDGAYQEFAAYKDKAKAINPKQLIERFSNVIYLGTFSKVYGLGGMRVGYGIASEHIISMLYKVRPPFNVTTLSLQAALIALKDQVFVSECIKNNAIEMARYEAFANEMGFTFIPSYGNFITFLHSHIESSHLCDWLLQNGLIVRNLRSYGLNAFRITIGRAEQNTRVFELIKAYLQIHN.

An N6-(pyridoxal phosphate)lysine modification is found at lysine 229.

This sequence belongs to the class-II pyridoxal-phosphate-dependent aminotransferase family. Histidinol-phosphate aminotransferase subfamily. Homodimer. It depends on pyridoxal 5'-phosphate as a cofactor.

The catalysed reaction is L-histidinol phosphate + 2-oxoglutarate = 3-(imidazol-4-yl)-2-oxopropyl phosphate + L-glutamate. Its pathway is amino-acid biosynthesis; L-histidine biosynthesis; L-histidine from 5-phospho-alpha-D-ribose 1-diphosphate: step 7/9. The chain is Histidinol-phosphate aminotransferase from Helicobacter hepaticus (strain ATCC 51449 / 3B1).